A 336-amino-acid chain; its full sequence is Glycerol-3-phosphate dehydrogenase [NAD(P)+] (336 aa).

NADPH is bound by residues Ser-14, Trp-15, Arg-35, Arg-36, and Lys-109. Residues Lys-109 and Gly-139 each contribute to the sn-glycerol 3-phosphate site. Residue Ala-143 coordinates NADPH. Lys-194, Asp-247, Ser-257, Arg-258, and Asn-259 together coordinate sn-glycerol 3-phosphate. Lys-194 functions as the Proton acceptor in the catalytic mechanism. Residue Arg-258 participates in NADPH binding. Glu-284 contributes to the NADPH binding site.

It belongs to the NAD-dependent glycerol-3-phosphate dehydrogenase family.

It localises to the cytoplasm. The catalysed reaction is sn-glycerol 3-phosphate + NAD(+) = dihydroxyacetone phosphate + NADH + H(+). It carries out the reaction sn-glycerol 3-phosphate + NADP(+) = dihydroxyacetone phosphate + NADPH + H(+). The protein operates within membrane lipid metabolism; glycerophospholipid metabolism. Its function is as follows. Catalyzes the reduction of the glycolytic intermediate dihydroxyacetone phosphate (DHAP) to sn-glycerol 3-phosphate (G3P), the key precursor for phospholipid synthesis. This is Glycerol-3-phosphate dehydrogenase [NAD(P)+] from Streptomyces avermitilis (strain ATCC 31267 / DSM 46492 / JCM 5070 / NBRC 14893 / NCIMB 12804 / NRRL 8165 / MA-4680).